Consider the following 305-residue polypeptide: Autophagy-related protein 14 (305 aa).

Residues 34–147 (KMNLLILRQE…LDTLSHILAR (114 aa)) adopt a coiled-coil conformation.

It belongs to the ATG14 family. In terms of assembly, component of the autophagy-specific VPS34 PI3-kinase complex I.

It localises to the preautophagosomal structure membrane. The protein resides in the vacuole membrane. Functionally, required for cytoplasm to vacuole transport (Cvt) and autophagy as a part of the autophagy-specific VPS34 PI3-kinase complex I. This complex is essential to recruit the ATG8-phosphatidylinositol conjugate and the ATG12-ATG5 conjugate to the pre-autophagosomal structure. ATG14 mediates the specific binding of the VPS34 PI3-kinase complex I to the preautophagosomal structure (PAS). The polypeptide is Autophagy-related protein 14 (Kluyveromyces marxianus (strain DMKU3-1042 / BCC 29191 / NBRC 104275) (Yeast)).